Consider the following 521-residue polypeptide: Medium/long-chain-fatty-acid--[acyl-carrier-protein] ligase MbtM (521 aa).

Residues Arg-146–Lys-172 form a disordered region.

Belongs to the ATP-dependent AMP-binding enzyme family.

The enzyme catalyses a long-chain fatty acid + holo-[ACP] + ATP = a long-chain fatty acyl-[ACP] + AMP + diphosphate. It catalyses the reaction a medium-chain fatty acid + holo-[ACP] + ATP = a medium-chain fatty acyl-[ACP] + AMP + diphosphate. Its pathway is siderophore biosynthesis; mycobactin biosynthesis. Activates lipidic moieties required for mycobactin biosynthesis. Converts medium- to long-chain aliphatic fatty acids into acyl adenylate, which is further transferred on to the phosphopantetheine arm of the carrier protein MbtL. The polypeptide is Medium/long-chain-fatty-acid--[acyl-carrier-protein] ligase MbtM (mbtM) (Mycolicibacterium paratuberculosis (strain ATCC BAA-968 / K-10) (Mycobacterium paratuberculosis)).